The sequence spans 423 residues: MGNTVAMILAGGQGTRLGVLTERIAKPAVPFGGKYRLIDFTLSNCVNSGIYRVGVLTQYRPHVLSKHIGIGRPWDLDRKDGGVEILPPYVGRHESDWYKGTANAVYQNLEFLEENDAELVLILSGDHVYAMNYNDLIDYHLLKEADGTIACMEVPIEEASRFGIMITDVDGRIVDFEEKPAKPRSNLASLGIYVFNYEFLKKVLIEDENDPNSSHDFGKDVIPRILRENLGSLYAFRFDGYWRDVGTLRSYWEANLELVLPVPPFNLYDPNWRFFTHTEEMPPAYVAPGSKVSTSLVSEGAEVYGNVFNSVIFQGVKIGRGTVVKNSVIMTRTEIGENCYLENVIIAENVKVGNNVRMGVGEDAESKLDPKVYSGLLTVVGMNSVIPDDMVIGKNCVIGIGVRPEDFKSKTLESGDYVIVREE.

Alpha-D-glucose 1-phosphate is bound by residues Y98, G163, 178-179 (EK), and S189.

Belongs to the bacterial/plant glucose-1-phosphate adenylyltransferase family. As to quaternary structure, homotetramer.

The catalysed reaction is alpha-D-glucose 1-phosphate + ATP + H(+) = ADP-alpha-D-glucose + diphosphate. The protein operates within glycan biosynthesis; glycogen biosynthesis. Its function is as follows. Involved in the biosynthesis of ADP-glucose, a building block required for the elongation reactions to produce glycogen. Catalyzes the reaction between ATP and alpha-D-glucose 1-phosphate (G1P) to produce pyrophosphate and ADP-Glc. The protein is Glucose-1-phosphate adenylyltransferase of Thermotoga sp. (strain RQ2).